Reading from the N-terminus, the 560-residue chain is Serine/threonine-protein kinase TOS3 (560 aa).

The Protein kinase domain maps to 50–344 (FEILATLGNG…LADIKVHPFM (295 aa)). ATP is bound by residues 56-64 (LGNGQYGKV) and K79. The active-site Proton acceptor is D189.

Belongs to the protein kinase superfamily. Ser/Thr protein kinase family. Autophosphorylated.

It catalyses the reaction L-seryl-[protein] + ATP = O-phospho-L-seryl-[protein] + ADP + H(+). The enzyme catalyses L-threonyl-[protein] + ATP = O-phospho-L-threonyl-[protein] + ADP + H(+). One of the three SNF1 protein kinases (with SAK1 and ELM1) which are required for growth on nonfermentable carbon sources and nonpreferred sugars and for response to environmental stress. Activates SNF1 by phosphorylation of its activation-loop 'Thr-210'. Required for the regulation by SNF1 of the transcription of a large set of genes, the modification the activity of metabolic enzymes, and the control of various nutrient-responsive cellular developmental processes. Also phosphorylates GAL83, MIG1 and SIP2. The sequence is that of Serine/threonine-protein kinase TOS3 (TOS3) from Saccharomyces cerevisiae (strain YJM789) (Baker's yeast).